A 226-amino-acid polypeptide reads, in one-letter code: ATP-dependent Clp protease proteolytic subunit 4 (226 aa).

The active-site Nucleophile is S122. H147 is an active-site residue.

It belongs to the peptidase S14 family. As to quaternary structure, fourteen ClpP subunits assemble into 2 heptameric rings which stack back to back to give a disk-like structure with a central cavity, resembling the structure of eukaryotic proteasomes.

Its subcellular location is the cytoplasm. The catalysed reaction is Hydrolysis of proteins to small peptides in the presence of ATP and magnesium. alpha-casein is the usual test substrate. In the absence of ATP, only oligopeptides shorter than five residues are hydrolyzed (such as succinyl-Leu-Tyr-|-NHMec, and Leu-Tyr-Leu-|-Tyr-Trp, in which cleavage of the -Tyr-|-Leu- and -Tyr-|-Trp bonds also occurs).. Functionally, cleaves peptides in various proteins in a process that requires ATP hydrolysis. Has a chymotrypsin-like activity. Plays a major role in the degradation of misfolded proteins. The polypeptide is ATP-dependent Clp protease proteolytic subunit 4 (Streptomyces avermitilis (strain ATCC 31267 / DSM 46492 / JCM 5070 / NBRC 14893 / NCIMB 12804 / NRRL 8165 / MA-4680)).